A 244-amino-acid chain; its full sequence is 2-C-methyl-D-erythritol 4-phosphate cytidylyltransferase (244 aa).

Belongs to the IspD/TarI cytidylyltransferase family. IspD subfamily.

It carries out the reaction 2-C-methyl-D-erythritol 4-phosphate + CTP + H(+) = 4-CDP-2-C-methyl-D-erythritol + diphosphate. Its pathway is isoprenoid biosynthesis; isopentenyl diphosphate biosynthesis via DXP pathway; isopentenyl diphosphate from 1-deoxy-D-xylulose 5-phosphate: step 2/6. Its function is as follows. Catalyzes the formation of 4-diphosphocytidyl-2-C-methyl-D-erythritol from CTP and 2-C-methyl-D-erythritol 4-phosphate (MEP). The chain is 2-C-methyl-D-erythritol 4-phosphate cytidylyltransferase from Prosthecochloris aestuarii (strain DSM 271 / SK 413).